The following is a 203-amino-acid chain: E3 ubiquitin-protein ligase RNF152 (203 aa).

Residues 12–55 form an RING-type zinc finger; that stretch reads CQICFNYYSPRRRPKLLDCKHTCCSVCLQQMRTSQKDVRCPWCR. The segment at 106–165 is necessary for interaction with RRAGA; it reads ISKERTLLPGDMGCRLLPGSQQKSLTVVTIPAEQQPLQGGAPQEAVEEEPDRRGVAKSST. The disordered stretch occupies residues 140 to 159; the sequence is QPLQGGAPQEAVEEEPDRRG. A helical membrane pass occupies residues 167 to 187; it reads SGVCTVILVACVLVFLLGIVL.

Belongs to the RNF152 family. As to quaternary structure, interacts with RRAGA (inactive GDP-bound form); stimulated by amino acid starvation. Interacts with SEC16A. Post-translationally, ubiquitinated. Autoubiquitinated in vitro, leading to its degradation by the proteasome.

The protein resides in the lysosome membrane. The enzyme catalyses S-ubiquitinyl-[E2 ubiquitin-conjugating enzyme]-L-cysteine + [acceptor protein]-L-lysine = [E2 ubiquitin-conjugating enzyme]-L-cysteine + N(6)-ubiquitinyl-[acceptor protein]-L-lysine.. Its pathway is protein modification; protein ubiquitination. Its function is as follows. E3 ubiquitin-protein ligase that acts as a negative regulator of mTORC1 signaling by mediating ubiquitination of RagA/RRAGA and RHEB. Catalyzes 'Lys-63'-linked polyubiquitination of RagA/RRAGA in response to amino acid starvation, thereby regulating mTORC1 signaling. Also mediates monoubiquitination of RHEB, promoting its association with the TSC-TBC complex and subsequent inhibition. Also mediates 'Lys-48'-linked polyubiquitination of target proteins and their subsequent targeting to the proteasome for degradation. Induces apoptosis when overexpressed. This is E3 ubiquitin-protein ligase RNF152 from Rattus norvegicus (Rat).